Reading from the N-terminus, the 342-residue chain is Dihydroorotase (342 aa).

Residues His13 and His15 each contribute to the Zn(2+) site. Residues 15–17 and Asn41 contribute to the substrate site; that span reads HLR. Residues Lys98, His135, and His173 each coordinate Zn(2+). Lys98 is subject to N6-carboxylysine. His135 lines the substrate pocket. Residue Leu218 participates in substrate binding. A Zn(2+)-binding site is contributed by Asp246. Residue Asp246 is part of the active site. Residues His250 and Ala262 each contribute to the substrate site.

The protein belongs to the metallo-dependent hydrolases superfamily. DHOase family. Class II DHOase subfamily. In terms of assembly, homodimer. It depends on Zn(2+) as a cofactor.

The enzyme catalyses (S)-dihydroorotate + H2O = N-carbamoyl-L-aspartate + H(+). It functions in the pathway pyrimidine metabolism; UMP biosynthesis via de novo pathway; (S)-dihydroorotate from bicarbonate: step 3/3. Functionally, catalyzes the reversible cyclization of carbamoyl aspartate to dihydroorotate. In Vibrio atlanticus (strain LGP32) (Vibrio splendidus (strain Mel32)), this protein is Dihydroorotase.